The primary structure comprises 412 residues: Divalent metal cation transporter MntH (412 aa).

Residues 1-19 (MTNYRVESSSGRAARKMRL) are Cytoplasmic-facing. A helical transmembrane segment spans residues 20–39 (ALMGPAFIAAIGYIDPGNFA). Topologically, residues 40–51 (TNIQAGASFGYQ) are periplasmic. Residues 52-71 (LLWVVVWANLMAMLIQILSA) form a helical membrane-spanning segment. At 72–95 (KLGIATGKNLAEQIRDHYPRPVVW) the chain is on the cytoplasmic side. A helical membrane pass occupies residues 96–118 (FYWVQAEIIAMATDLAEFIGAAI). The Periplasmic segment spans residues 119 to 125 (GFKLILG). A helical membrane pass occupies residues 126-145 (VSLLQGAVLTGIATFLILML). Topologically, residues 146–155 (QRRGQKPLEK) are cytoplasmic. A helical membrane pass occupies residues 156 to 175 (VIGGLLLFVAAAYIVELIFS). Residues 176 to 196 (QPNLAQLGKGMVIPSLPTSEA) are Periplasmic-facing. The helical transmembrane segment at 197–220 (VFLAAGVLGATIMPHVIYLHSSLT) threads the bilayer. The Cytoplasmic segment spans residues 221 to 238 (QHLHGGSRQQRYSATKWD). Residues 239–258 (VAIAMTIAGFVNLVMMATAA) traverse the membrane as a helical segment. At 259-276 (AAFHFSGHTGVADLDEAY) the chain is on the periplasmic side. Residues 277 to 297 (LTLQPLLSHAAATVFGLSLVA) form a helical membrane-spanning segment. Topologically, residues 298-327 (AGLSSTVVGTLAGQVVMQGFIRFHIPLWVR) are cytoplasmic. Residues 328-344 (RTVTMLPSFIVILMGLD) traverse the membrane as a helical segment. At 345–350 (PTRILV) the chain is on the periplasmic side. A helical membrane pass occupies residues 351–370 (MSQVLLSFGIALALVPLLIF). Over 371-387 (TSDSKLMGDLVNSKRVK) the chain is Cytoplasmic. A helical membrane pass occupies residues 388–406 (QTGWVIVVLVVALNIWLLV). Topologically, residues 407-412 (GTALGL) are periplasmic.

The protein belongs to the NRAMP family.

It is found in the cell inner membrane. In terms of biological role, h(+)-stimulated, divalent metal cation uptake system. The protein is Divalent metal cation transporter MntH of Shigella flexneri serotype 5b (strain 8401).